The chain runs to 404 residues: O-antigen ligase (404 aa).

11 helical membrane passes run 16–32 (IWNK…YFLD), 39–55 (HLII…QVSR), 67–84 (SVFY…YSIL), 96–115 (FENT…PVLL), 127–147 (VLFS…ILYI), 168–183 (SMVF…WLFR), 189–221 (LVFL…GVLW), 228–246 (WKLI…ALVI), 324–343 (ILYI…VYLY), 363–379 (YNAH…FYIV), and 385–401 (QVDI…LLAL).

Belongs to the O-antigen ligase family.

The protein localises to the cell inner membrane. The catalysed reaction is a lipid-linked O antigen + a lipid A-core oligosaccharide = a lipopolysaccharide + a polyisoprenyl diphosphate.. It functions in the pathway bacterial outer membrane biogenesis; lipopolysaccharide biosynthesis. Transferase involved in the biosynthesis of the lipopolysaccharide (LPS). Catalyzes the transfer of a polymerized O-antigen molecule from its polyprenyl diphosphate membrane anchor to a terminal sugar of the lipid A-core oligosaccharide, finalizing the biosynthesis of the lipopolysaccharide. May also be involved in a feedback mechanism to regulate O-unit synthesis, based on the availability of O units on the periplasmic face of the membrane. This is O-antigen ligase from Salmonella typhimurium (strain LT2 / SGSC1412 / ATCC 700720).